A 420-amino-acid polypeptide reads, in one-letter code: MTNVLIEDLKWRGLIYQQTDEQGIEDLLNKEQVTLYCGADPTADSLHIGHLLPFLTLRRFQEHGHRPIVLIGGGTGMIGDPSGKSEERVLQTEEQVDKNIEGISKQMHNIFEFGTDHGAVLVNNRDWLGQISLISFLRDYGKHVGVNYMLGKDSIQSRLEHGISYTEFTYTILQAIDFGHLNRELNCKIQVGGSDQWGNITSGIELMRRMYGQTDAYGLTIPLVTKSDGKKFGKSESGAVWLDAEKTSPYEFYQFWINQSDEDVIKFLKYFTFLGKEEIDRLEQSKNEAPHLREAQKTLAEEVTKFIHGEDALNDAIRISQALFSGDLKSLSAKELKDGFKDVPQVTLSNDTTNIVEVLIETGISPSKRQAREDVNNGAIYINGERQQDVNYALAPEDKIDGEFTIIRRGKKKYFMVNYQ.

Tyrosine 36 contributes to the L-tyrosine binding site. The 'HIGH' region motif lies at 41–50 (PTADSLHIGH). L-tyrosine-binding residues include tyrosine 170 and glutamine 174. The 'KMSKS' region motif lies at 231–235 (KFGKS). An ATP-binding site is contributed by lysine 234. The 68-residue stretch at 353–420 (TNIVEVLIET…KKKYFMVNYQ (68 aa)) folds into the S4 RNA-binding domain.

This sequence belongs to the class-I aminoacyl-tRNA synthetase family. TyrS type 1 subfamily. As to quaternary structure, homodimer.

It localises to the cytoplasm. The enzyme catalyses tRNA(Tyr) + L-tyrosine + ATP = L-tyrosyl-tRNA(Tyr) + AMP + diphosphate + H(+). In terms of biological role, catalyzes the attachment of tyrosine to tRNA(Tyr) in a two-step reaction: tyrosine is first activated by ATP to form Tyr-AMP and then transferred to the acceptor end of tRNA(Tyr). This Staphylococcus aureus (strain bovine RF122 / ET3-1) protein is Tyrosine--tRNA ligase.